We begin with the raw amino-acid sequence, 393 residues long: S-adenosylmethionine synthase 2 (393 aa).

Glu9 contacts Mg(2+). His15 provides a ligand contact to ATP. Glu43 is a K(+) binding site. L-methionine contacts are provided by Glu56 and Gln99. Residues 167 to 169 (DGK), 235 to 238 (SGRF), Asp246, 252 to 253 (RK), Ala269, Lys273, and Lys277 contribute to the ATP site. Asp246 contacts L-methionine. Residue Lys277 coordinates L-methionine.

This sequence belongs to the AdoMet synthase family. As to quaternary structure, homotetramer. The cofactor is Mn(2+). It depends on Mg(2+) as a cofactor. Co(2+) is required as a cofactor. Requires K(+) as cofactor. NH4(+) serves as cofactor. As to expression, mostly expressed in roots, and, to a lower extent, in hypocotyls and cotyledons.

It is found in the cytoplasm. The catalysed reaction is L-methionine + ATP + H2O = S-adenosyl-L-methionine + phosphate + diphosphate. Its pathway is amino-acid biosynthesis; S-adenosyl-L-methionine biosynthesis; S-adenosyl-L-methionine from L-methionine: step 1/1. With respect to regulation, inhibited by products of SAMS reaction (SAM, Pi, PPi), substrate analogs (cycloleucine and ethionine), and alternative nucleotides (GTP, CTP and ADP). Strongly repressed by PPPi. Catalyzes the formation of S-adenosylmethionine from methionine and ATP. The reaction comprises two steps that are both catalyzed by the same enzyme: formation of S-adenosylmethionine (AdoMet) and triphosphate, and subsequent hydrolysis of the triphosphate. This chain is S-adenosylmethionine synthase 2 (SAMS2), found in Catharanthus roseus (Madagascar periwinkle).